Here is a 145-residue protein sequence, read N- to C-terminus: D-aminoacyl-tRNA deacylase (145 aa).

The short motif at 137–138 (GP) is the Gly-cisPro motif, important for rejection of L-amino acids element.

The protein belongs to the DTD family. Homodimer.

It is found in the cytoplasm. The catalysed reaction is glycyl-tRNA(Ala) + H2O = tRNA(Ala) + glycine + H(+). It catalyses the reaction a D-aminoacyl-tRNA + H2O = a tRNA + a D-alpha-amino acid + H(+). An aminoacyl-tRNA editing enzyme that deacylates mischarged D-aminoacyl-tRNAs. Also deacylates mischarged glycyl-tRNA(Ala), protecting cells against glycine mischarging by AlaRS. Acts via tRNA-based rather than protein-based catalysis; rejects L-amino acids rather than detecting D-amino acids in the active site. By recycling D-aminoacyl-tRNA to D-amino acids and free tRNA molecules, this enzyme counteracts the toxicity associated with the formation of D-aminoacyl-tRNA entities in vivo and helps enforce protein L-homochirality. The protein is D-aminoacyl-tRNA deacylase of Pseudomonas putida (strain ATCC 700007 / DSM 6899 / JCM 31910 / BCRC 17059 / LMG 24140 / F1).